The following is a 64-amino-acid chain: Large ribosomal subunit protein bL35 (64 aa).

A disordered region spans residues 17–41 (TGSGKVKRERMNGSHNLEHKNRKRT). The span at 25–35 (ERMNGSHNLEH) shows a compositional bias: basic and acidic residues.

This sequence belongs to the bacterial ribosomal protein bL35 family.

This chain is Large ribosomal subunit protein bL35, found in Chlorobaculum parvum (strain DSM 263 / NCIMB 8327) (Chlorobium vibrioforme subsp. thiosulfatophilum).